The following is a 445-amino-acid chain: ATP-dependent protease ATPase subunit HslU (445 aa).

Residues isoleucine 17, 59-64 (GVGKTE), aspartate 254, glutamate 319, and arginine 391 contribute to the ATP site.

This sequence belongs to the ClpX chaperone family. HslU subfamily. A double ring-shaped homohexamer of HslV is capped on each side by a ring-shaped HslU homohexamer. The assembly of the HslU/HslV complex is dependent on binding of ATP.

It is found in the cytoplasm. Functionally, ATPase subunit of a proteasome-like degradation complex; this subunit has chaperone activity. The binding of ATP and its subsequent hydrolysis by HslU are essential for unfolding of protein substrates subsequently hydrolyzed by HslV. HslU recognizes the N-terminal part of its protein substrates and unfolds these before they are guided to HslV for hydrolysis. The chain is ATP-dependent protease ATPase subunit HslU from Pseudomonas savastanoi pv. phaseolicola (strain 1448A / Race 6) (Pseudomonas syringae pv. phaseolicola (strain 1448A / Race 6)).